Here is a 179-residue protein sequence, read N- to C-terminus: Hypoxanthine-guanine phosphoribosyltransferase (179 aa).

Diphosphate is bound by residues lysine 42 and glycine 43. Mg(2+) contacts are provided by glutamate 98 and aspartate 99. Glutamate 102 acts as the Proton acceptor in catalysis. Residues lysine 130, 151–152 (FV), and aspartate 158 contribute to the GMP site. Arginine 164 serves as a coordination point for diphosphate.

Belongs to the purine/pyrimidine phosphoribosyltransferase family. It depends on Mg(2+) as a cofactor.

Its subcellular location is the cytoplasm. It catalyses the reaction IMP + diphosphate = hypoxanthine + 5-phospho-alpha-D-ribose 1-diphosphate. The catalysed reaction is GMP + diphosphate = guanine + 5-phospho-alpha-D-ribose 1-diphosphate. It functions in the pathway purine metabolism; IMP biosynthesis via salvage pathway; IMP from hypoxanthine: step 1/1. Its pathway is purine metabolism; GMP biosynthesis via salvage pathway; GMP from guanine: step 1/1. Functionally, purine salvage pathway enzyme that catalyzes the transfer of the ribosyl-5-phosphate group from 5-phospho-alpha-D-ribose 1-diphosphate (PRPP) to the N9 position of the 6-oxopurines hypoxanthine and guanine to form the corresponding ribonucleotides IMP (inosine 5'-monophosphate) and GMP (guanosine 5'-monophosphate), with the release of PPi. This chain is Hypoxanthine-guanine phosphoribosyltransferase (hpt), found in Staphylococcus epidermidis (strain ATCC 35984 / DSM 28319 / BCRC 17069 / CCUG 31568 / BM 3577 / RP62A).